The sequence spans 266 residues: GTP cyclohydrolase FolE2 (266 aa).

The protein belongs to the GTP cyclohydrolase IV family.

The enzyme catalyses GTP + H2O = 7,8-dihydroneopterin 3'-triphosphate + formate + H(+). The protein operates within cofactor biosynthesis; 7,8-dihydroneopterin triphosphate biosynthesis; 7,8-dihydroneopterin triphosphate from GTP: step 1/1. Converts GTP to 7,8-dihydroneopterin triphosphate. The protein is GTP cyclohydrolase FolE2 of Methylobacillus flagellatus (strain ATCC 51484 / DSM 6875 / VKM B-1610 / KT).